The following is a 683-amino-acid chain: Leucine-rich repeat and calponin homology domain-containing protein 4 (683 aa).

Residues 1–18 (MAAAVAAPLAAGGEEAAA) are compositionally biased toward low complexity. The tract at residues 1–34 (MAAAVAAPLAAGGEEAAATTSVPGSPGLPGRRSA) is disordered. 9 LRR repeats span residues 41–64 (AVATGTLNLSNRRLKHFPRGAARS), 67–90 (LSDITQADLSRNRFPEVPEAACQL), 92–113 (SLEGLSLYHNCLRCLNPALGNL), 114–136 (TALTYLNLSRNQLSLLPPYICQL), 138–158 (LRVLIVSNNKLGALPPDIGTL), 159–181 (GSLRQLDVSSNELQSLPSELCGL), 182–204 (SSLRDLNVRRNQLSTLPEELGDL), 206–226 (LVRLDFSCNRVSRIPVSFCRL), and 227–250 (RHLQVILLDSNPLQSPPAQVCLKG). Positions 268–292 (ALGDLAPSRPPSFSPCPAEDLFPGH) are disordered. 6 positions are modified to phosphoserine: serine 279, serine 281, serine 304, serine 307, serine 309, and serine 313. 2 disordered regions span residues 326 to 436 (FRIS…LLKP) and 449 to 539 (STQA…DEKD). 3 stretches are compositionally biased toward basic and acidic residues: residues 330–345 (ELAREPRGPRERKEDG), 357–376 (IDSHVPGEDEERGTVEEQRP), and 384–418 (GDRERAPSSRREEPAGEERRRPDTLQLWQERERRQ). A phosphoserine mark is found at serine 432 and serine 457. Residues 449-460 (STQAMHNGSPKS) show a composition bias toward polar residues. Composition is skewed to low complexity over residues 461-481 (SASQAGAAAGQGAPAPAPASQ) and 511-524 (SSSQSGSGPSSPDS). Residues serine 511, serine 513, serine 517, serine 521, and serine 589 each carry the phosphoserine modification. One can recognise a Calponin-homology (CH) domain in the interval 534-647 (VPDEKDLMTQ…ALEAVKRVGG (114 aa)). A helical membrane pass occupies residues 653–673 (LWPPSGLGGFVVFYVVLMLLL).

The protein resides in the cell membrane. Functionally, accessory protein that regulates signaling by multiple TLRs, acting as a broad-spanning regulator of the innate immune response. In macrophages, binds LPS and promotes proper docking of LPS in lipid raft membrane. May be required for lipid raft maintenance. The protein is Leucine-rich repeat and calponin homology domain-containing protein 4 of Homo sapiens (Human).